The chain runs to 211 residues: Large ribosomal subunit protein uL3 (211 aa).

Position 150 is an N5-methylglutamine (Gln-150).

It belongs to the universal ribosomal protein uL3 family. As to quaternary structure, part of the 50S ribosomal subunit. Forms a cluster with proteins L14 and L19. In terms of processing, methylated by PrmB.

In terms of biological role, one of the primary rRNA binding proteins, it binds directly near the 3'-end of the 23S rRNA, where it nucleates assembly of the 50S subunit. In Pseudomonas fluorescens (strain SBW25), this protein is Large ribosomal subunit protein uL3.